Here is a 149-residue protein sequence, read N- to C-terminus: Small ribosomal subunit protein uS11z (149 aa).

The disordered stretch occupies residues 130-149 (VTPVPTDSTRRKGGRRGRRL). Residues 140-149 (RKGGRRGRRL) show a composition bias toward basic residues.

This sequence belongs to the universal ribosomal protein uS11 family.

The sequence is that of Small ribosomal subunit protein uS11z from Zea mays (Maize).